The following is a 366-amino-acid chain: S-adenosylmethionine synthase 1 (366 aa).

Residue glutamate 18 participates in K(+) binding. The L-methionine site is built by glutamate 31 and glutamine 74. ATP-binding positions include 142 to 144, 210 to 213, aspartate 221, 227 to 228, alanine 244, lysine 248, and lysine 252; these read DGN, SGRF, and RK. Residue aspartate 221 coordinates L-methionine. Residue lysine 252 participates in L-methionine binding.

It belongs to the AdoMet synthase family. In terms of assembly, homotetramer. Requires Mn(2+) as cofactor. It depends on Mg(2+) as a cofactor. Co(2+) is required as a cofactor. K(+) serves as cofactor.

It localises to the cytoplasm. It catalyses the reaction L-methionine + ATP + H2O = S-adenosyl-L-methionine + phosphate + diphosphate. The protein operates within amino-acid biosynthesis; S-adenosyl-L-methionine biosynthesis; S-adenosyl-L-methionine from L-methionine: step 1/1. Catalyzes the formation of S-adenosylmethionine from methionine and ATP. The reaction comprises two steps that are both catalyzed by the same enzyme: formation of S-adenosylmethionine (AdoMet) and triphosphate, and subsequent hydrolysis of the triphosphate. This Pisum sativum (Garden pea) protein is S-adenosylmethionine synthase 1 (SAMS1).